The chain runs to 201 residues: FMN-dependent NADH:quinone oxidoreductase (201 aa).

FMN is bound by residues serine 9 and 16–18 (SYS).

This sequence belongs to the azoreductase type 1 family. As to quaternary structure, homodimer. Requires FMN as cofactor.

It carries out the reaction 2 a quinone + NADH + H(+) = 2 a 1,4-benzosemiquinone + NAD(+). It catalyses the reaction N,N-dimethyl-1,4-phenylenediamine + anthranilate + 2 NAD(+) = 2-(4-dimethylaminophenyl)diazenylbenzoate + 2 NADH + 2 H(+). Quinone reductase that provides resistance to thiol-specific stress caused by electrophilic quinones. Its function is as follows. Also exhibits azoreductase activity. Catalyzes the reductive cleavage of the azo bond in aromatic azo compounds to the corresponding amines. The polypeptide is FMN-dependent NADH:quinone oxidoreductase (Mesomycoplasma hyopneumoniae (strain 7448) (Mycoplasma hyopneumoniae)).